The following is a 217-amino-acid chain: Small ribosomal subunit protein uS3 (217 aa).

Residues 38-106 (IRKFVQKELA…QVHINIIEIK (69 aa)) enclose the KH type-2 domain.

This sequence belongs to the universal ribosomal protein uS3 family. As to quaternary structure, part of the 30S ribosomal subunit. Forms a tight complex with proteins S10 and S14.

Functionally, binds the lower part of the 30S subunit head. Binds mRNA in the 70S ribosome, positioning it for translation. The protein is Small ribosomal subunit protein uS3 of Streptococcus sanguinis (strain SK36).